We begin with the raw amino-acid sequence, 2352 residues long: Cell wall alpha-1,3-glucan synthase mok12 (2352 aa).

The disordered stretch occupies residues 1786–1813 (SNDFGIREVPLSDANQSSQADSTSIDRY). The segment covering 1798–1813 (DANQSSQADSTSIDRY) has biased composition (polar residues).

The protein belongs to the glycosyltransferase group 1 family.

It catalyses the reaction [(1-&gt;3)-alpha-D-glucosyl](n) + UDP-alpha-D-glucose = [(1-&gt;3)-alpha-D-glucosyl](n+1) + UDP + H(+). The polypeptide is Cell wall alpha-1,3-glucan synthase mok12 (mok12) (Schizosaccharomyces pombe (strain 972 / ATCC 24843) (Fission yeast)).